The sequence spans 102 residues: Small ribosomal subunit protein uS10 (102 aa).

This sequence belongs to the universal ribosomal protein uS10 family. In terms of assembly, part of the 30S ribosomal subunit.

In terms of biological role, involved in the binding of tRNA to the ribosomes. The protein is Small ribosomal subunit protein uS10 of Oceanobacillus iheyensis (strain DSM 14371 / CIP 107618 / JCM 11309 / KCTC 3954 / HTE831).